A 55-amino-acid chain; its full sequence is Large ribosomal subunit protein bL33 (55 aa).

Belongs to the bacterial ribosomal protein bL33 family.

This is Large ribosomal subunit protein bL33 from Xanthobacter autotrophicus (strain ATCC BAA-1158 / Py2).